The sequence spans 678 residues: Glycine--tRNA ligase beta subunit (678 aa).

The protein belongs to the class-II aminoacyl-tRNA synthetase family. In terms of assembly, tetramer of two alpha and two beta subunits.

The protein localises to the cytoplasm. It catalyses the reaction tRNA(Gly) + glycine + ATP = glycyl-tRNA(Gly) + AMP + diphosphate. The chain is Glycine--tRNA ligase beta subunit from Streptococcus suis (strain 98HAH33).